A 562-amino-acid chain; its full sequence is NAD-dependent malic enzyme (562 aa).

Tyrosine 101 (proton donor) is an active-site residue. Arginine 154 provides a ligand contact to NAD(+). The active-site Proton acceptor is the lysine 172. Residues glutamate 243, aspartate 244, and aspartate 267 each contribute to the a divalent metal cation site. Residues aspartate 267 and asparagine 415 each contribute to the NAD(+) site.

This sequence belongs to the malic enzymes family. Homotetramer. Mg(2+) is required as a cofactor. Requires Mn(2+) as cofactor.

It catalyses the reaction (S)-malate + NAD(+) = pyruvate + CO2 + NADH. It carries out the reaction oxaloacetate + H(+) = pyruvate + CO2. This Shewanella denitrificans (strain OS217 / ATCC BAA-1090 / DSM 15013) protein is NAD-dependent malic enzyme.